We begin with the raw amino-acid sequence, 425 residues long: Serine--tRNA ligase (425 aa).

230 to 232 (TAE) is an L-serine binding site. An ATP-binding site is contributed by 261 to 263 (RSE). Glu-284 lines the L-serine pocket. 348–351 (EISS) is a binding site for ATP. Ser-384 lines the L-serine pocket.

This sequence belongs to the class-II aminoacyl-tRNA synthetase family. Type-1 seryl-tRNA synthetase subfamily. In terms of assembly, homodimer. The tRNA molecule binds across the dimer.

The protein resides in the cytoplasm. The catalysed reaction is tRNA(Ser) + L-serine + ATP = L-seryl-tRNA(Ser) + AMP + diphosphate + H(+). It catalyses the reaction tRNA(Sec) + L-serine + ATP = L-seryl-tRNA(Sec) + AMP + diphosphate + H(+). Its pathway is aminoacyl-tRNA biosynthesis; selenocysteinyl-tRNA(Sec) biosynthesis; L-seryl-tRNA(Sec) from L-serine and tRNA(Sec): step 1/1. Its function is as follows. Catalyzes the attachment of serine to tRNA(Ser). Is also able to aminoacylate tRNA(Sec) with serine, to form the misacylated tRNA L-seryl-tRNA(Sec), which will be further converted into selenocysteinyl-tRNA(Sec). The sequence is that of Serine--tRNA ligase from Streptococcus pyogenes serotype M3 (strain SSI-1).